The primary structure comprises 612 residues: Zinc metalloproteinase-disintegrin-like 2d (612 aa).

The first 20 residues, 1–20, serve as a signal peptide directing secretion; sequence MIQVLLVTICLAVFPYQGSS. Positions 21-189 are excised as a propeptide; the sequence is IILGSGNVND…KKASQLNLTP (169 aa). In terms of domain architecture, Peptidase M12B spans 199-395; sequence KYIELVIVAD…NRPPCILNKP (197 aa). Glu-202 is a binding site for Ca(2+). An N-linked (GlcNAc...) asparagine glycan is attached at Asn-218. Residue Asp-286 coordinates Ca(2+). Intrachain disulfides connect Cys-310-Cys-390, Cys-350-Cys-374, and Cys-352-Cys-357. Position 335 (His-335) interacts with Zn(2+). Glu-336 is a catalytic residue. His-339 and His-345 together coordinate Zn(2+). 8 residues coordinate Ca(2+): Cys-390, Asn-393, Val-405, Asn-408, Phe-410, Glu-412, Glu-415, and Asp-418. The 87-residue stretch at 403-489 folds into the Disintegrin domain; the sequence is PPVCGNYFVE…DCPTDNFQRN (87 aa). 14 cysteine pairs are disulfide-bonded: Cys-406–Cys-435, Cys-417–Cys-430, Cys-419–Cys-425, Cys-429–Cys-452, Cys-443–Cys-449, Cys-448–Cys-474, Cys-461–Cys-481, Cys-468–Cys-500, Cys-493–Cys-505, Cys-512–Cys-562, Cys-527–Cys-573, Cys-540–Cys-550, Cys-557–Cys-599, and Cys-593–Cys-605. Residues 467 to 469 carry the D/ECD-tripeptide motif; that stretch reads ECD.

Belongs to the venom metalloproteinase (M12B) family. P-III subfamily. Requires Zn(2+) as cofactor. Expressed by the venom gland.

The protein localises to the secreted. Snake venom metalloproteinase that impairs hemostasis in the envenomed animal. This is Zinc metalloproteinase-disintegrin-like 2d from Crotalus adamanteus (Eastern diamondback rattlesnake).